The primary structure comprises 241 residues: Pyridoxine 5'-phosphate synthase (241 aa).

N7 contacts 3-amino-2-oxopropyl phosphate. 9 to 10 (DH) is a 1-deoxy-D-xylulose 5-phosphate binding site. 3-amino-2-oxopropyl phosphate is bound at residue R18. Catalysis depends on H43, which acts as the Proton acceptor. The 1-deoxy-D-xylulose 5-phosphate site is built by R45 and H50. The Proton acceptor role is filled by E70. T100 serves as a coordination point for 1-deoxy-D-xylulose 5-phosphate. H191 (proton donor) is an active-site residue. Residues G192 and 213-214 (GH) each bind 3-amino-2-oxopropyl phosphate.

It belongs to the PNP synthase family. Homooctamer; tetramer of dimers.

Its subcellular location is the cytoplasm. It carries out the reaction 3-amino-2-oxopropyl phosphate + 1-deoxy-D-xylulose 5-phosphate = pyridoxine 5'-phosphate + phosphate + 2 H2O + H(+). The protein operates within cofactor biosynthesis; pyridoxine 5'-phosphate biosynthesis; pyridoxine 5'-phosphate from D-erythrose 4-phosphate: step 5/5. Its function is as follows. Catalyzes the complicated ring closure reaction between the two acyclic compounds 1-deoxy-D-xylulose-5-phosphate (DXP) and 3-amino-2-oxopropyl phosphate (1-amino-acetone-3-phosphate or AAP) to form pyridoxine 5'-phosphate (PNP) and inorganic phosphate. This Maridesulfovibrio salexigens (strain ATCC 14822 / DSM 2638 / NCIMB 8403 / VKM B-1763) (Desulfovibrio salexigens) protein is Pyridoxine 5'-phosphate synthase.